Consider the following 610-residue polypeptide: Solute carrier family 23 member 3 (610 aa).

Polar residues predominate over residues 1–16 (MSRSPLNPSQLRSVGS). The tract at residues 1-32 (MSRSPLNPSQLRSVGSQDALAPLPPPAPQNPS) is disordered. At 1–49 (MSRSPLNPSQLRSVGSQDALAPLPPPAPQNPSTHSWDPLCGSLPWGLSC) the chain is on the cytoplasmic side. A helical transmembrane segment spans residues 50–70 (LLALQHVLVMASLLCVSHLLL). At 71-85 (LCSLSPGGLSYSPSQ) the chain is on the extracellular side. The chain crosses the membrane as a helical span at residues 86-106 (LLASSFFSCGMSTILQTWMGS). The Cytoplasmic portion of the chain corresponds to 107-164 (RLPLVQAPSLEFLIPALVLTSQKLPRAIQTPGNSSLMLHLCRGPSCHGLGHWNTSLQE). A helical transmembrane segment spans residues 165–185 (VSGAVVVSGLLQGMMGLLGSP). Over 186–187 (GH) the chain is Extracellular. Residues 188–208 (VFPHCGPLVLAPSLVVAGLSA) form a helical membrane-spanning segment. Residues 209-211 (HRE) lie on the Cytoplasmic side of the membrane. A helical membrane pass occupies residues 212-232 (VAQFCFTHWGLALLVILLMVV). At 233–266 (CSQHLGSCQFHVCPWRRASTSSTHTPLPVFRLLS) the chain is on the extracellular side. Residues 267 to 287 (VLIPVACVWIVSAFVGFSVIP) traverse the membrane as a helical segment. The Cytoplasmic segment spans residues 288 to 316 (QELSAPTKAPWIWLPHPGEWNWPLLTPRA). A helical membrane pass occupies residues 317-337 (LAAGISMALAASTSSLGCYAL). Residues 338–355 (CGRLLHLPPPPPHACSRG) lie on the Extracellular side of the membrane. Residues 356–376 (LSLEGLGSVLAGLLGSPMGTA) traverse the membrane as a helical segment. The Cytoplasmic segment spans residues 377–394 (SSFPNVGKVGLIQAGSQQ). A helical transmembrane segment spans residues 395-414 (VAHLVGLLCVGLGLSPRLAQ). Residues 415 to 423 (LLTTIPLPV) lie on the Extracellular side of the membrane. A helical transmembrane segment spans residues 424–446 (VGGVLGVTQAVVLSAGFSSFYLA). Residues 447 to 452 (DIDSGR) are Cytoplasmic-facing. A helical transmembrane segment spans residues 453-472 (NIFIVGFSIFMALLLPRWFR). Over 473-486 (EAPVLFSTGWSPLD) the chain is Extracellular. The helical transmembrane segment at 487 to 507 (VLLHSLLTQPIFLAGLSGFLL) threads the bilayer. Topologically, residues 508-610 (ENTIPGTQLE…SSREGFRSQK (103 aa)) are cytoplasmic. A disordered region spans residues 571 to 610 (PEDPGDEEGGSSEPEEMADLLPGSGEPCPESSREGFRSQK). Acidic residues predominate over residues 573–588 (DPGDEEGGSSEPEEMA). A compositionally biased stretch (basic and acidic residues) spans 601 to 610 (SSREGFRSQK).

Belongs to the nucleobase:cation symporter-2 (NCS2) (TC 2.A.40) family.

It localises to the membrane. The enzyme catalyses hypoxanthine(out) + Na(+)(out) = hypoxanthine(in) + Na(+)(in). Its function is as follows. Acts as a sodium-dependent hypoxanthine transporter. May show xanthine-hypoxanthine exchange activity. This chain is Solute carrier family 23 member 3 (SLC23A3), found in Homo sapiens (Human).